A 492-amino-acid chain; its full sequence is RNase aCSPSF2 (492 aa).

A divalent metal cation is bound by residues His-130, His-132, Asp-134, His-135, His-213, Asp-234, and His-460.

It belongs to the metallo-beta-lactamase superfamily. RNA-metabolizing metallo-beta-lactamase-like family. The cofactor is Mg(2+).

Its function is as follows. A 5'-3' exoribonuclease, more active on 5'-monophosphorylated and 5'-hydroxylated RNA than 5'-tri-phosphorylated RNA; note there is no evidence for accumulation of 5'-monophosphorylated RNA in this organism. Translation initiation factor 2 subunit gamma but not subunit alpha protects 5'-tri-phosphorylated RNA from degradation by this enzyme. In Saccharolobus solfataricus (strain ATCC 35092 / DSM 1617 / JCM 11322 / P2) (Sulfolobus solfataricus), this protein is RNase aCSPSF2.